Here is a 426-residue protein sequence, read N- to C-terminus: Serine--tRNA ligase (426 aa).

Position 231–233 (231–233) interacts with L-serine; the sequence is TSE. Residue 262 to 264 coordinates ATP; it reads RSE. Glu285 is a binding site for L-serine. 349-352 is an ATP binding site; sequence EISS. Ser385 contacts L-serine.

Belongs to the class-II aminoacyl-tRNA synthetase family. Type-1 seryl-tRNA synthetase subfamily. In terms of assembly, homodimer. The tRNA molecule binds across the dimer.

It is found in the cytoplasm. The catalysed reaction is tRNA(Ser) + L-serine + ATP = L-seryl-tRNA(Ser) + AMP + diphosphate + H(+). The enzyme catalyses tRNA(Sec) + L-serine + ATP = L-seryl-tRNA(Sec) + AMP + diphosphate + H(+). It functions in the pathway aminoacyl-tRNA biosynthesis; selenocysteinyl-tRNA(Sec) biosynthesis; L-seryl-tRNA(Sec) from L-serine and tRNA(Sec): step 1/1. Functionally, catalyzes the attachment of serine to tRNA(Ser). Is also able to aminoacylate tRNA(Sec) with serine, to form the misacylated tRNA L-seryl-tRNA(Sec), which will be further converted into selenocysteinyl-tRNA(Sec). The polypeptide is Serine--tRNA ligase (Legionella pneumophila subsp. pneumophila (strain Philadelphia 1 / ATCC 33152 / DSM 7513)).